A 202-amino-acid polypeptide reads, in one-letter code: Small ribosomal subunit protein uS4 (202 aa).

A disordered region spans residues 15-42; that stretch reads LGDLPGLTRKAAKRSYPPGQHGQARRKR. One can recognise an S4 RNA-binding domain in the interval 90 to 152; it reads SRLDNICFRL…KGSKQLAEGN (63 aa).

This sequence belongs to the universal ribosomal protein uS4 family. Part of the 30S ribosomal subunit. Contacts protein S5. The interaction surface between S4 and S5 is involved in control of translational fidelity.

Its function is as follows. One of the primary rRNA binding proteins, it binds directly to 16S rRNA where it nucleates assembly of the body of the 30S subunit. In terms of biological role, with S5 and S12 plays an important role in translational accuracy. The chain is Small ribosomal subunit protein uS4 from Synechococcus sp. (strain CC9902).